Consider the following 435-residue polypeptide: Cytidine monophosphate-N-acetylneuraminic acid hydroxylase (435 aa).

It belongs to the CMP-Neu5Ac hydroxylase family. [2Fe-2S] cluster serves as cofactor.

The protein localises to the cytoplasm. It catalyses the reaction CMP-N-acetyl-beta-neuraminate + 2 Fe(II)-[cytochrome b5] + O2 + 2 H(+) = CMP-N-glycoloyl-beta-neuraminate + 2 Fe(III)-[cytochrome b5] + H2O. It functions in the pathway amino-sugar metabolism; N-acetylneuraminate metabolism. Functionally, sialic acids are components of carbohydrate chains of glycoconjugates and are involved in cell-cell recognition and cell-pathogen interactions. Catalyzes the conversion of CMP-N-acetylneuraminic acid (CMP-Neu5Ac) into its hydroxylated derivative CMP-N-glycolylneuraminic acid (CMP-Neu5Gc), a sialic acid abundantly expressed at the surface of many cells. The polypeptide is Cytidine monophosphate-N-acetylneuraminic acid hydroxylase (Sus scrofa (Pig)).